A 635-amino-acid chain; its full sequence is Signal recognition particle subunit SRP72 (635 aa).

TPR repeat units follow at residues 7–42 (GGLY…YPKE), 75–105 (GHVG…DKDD), 106–139 (VKAL…HSDD), 171–204 (YSQL…CRKS), 220–253 (DSIR…NHPD), 255–290 (SVKA…DQTK), and 436–469 (VEVE…QCRL). The tract at residues 539-635 (KRKRKIRLPK…QKKKKNASKF (97 aa)) is disordered. A compositionally biased stretch (basic and acidic residues) spans 557–569 (DPERWLPRQERST). Positions 625 to 635 (KQKKKKNASKF) are enriched in basic residues.

The protein belongs to the SRP72 family. As to quaternary structure, heterodimer with srpa-68. Srpa-68-srpa-72 heterodimer formation is stabilized by the presence of 7SL RNA. Component of a signal recognition particle (SRP) complex that consists of a 7SL RNA molecule of 300 nucleotides and six protein subunits: srpa-72, srpa-68, SRP54, F37F2.2/SRP19, F25G6.8/SRP14 and ZK512.4/SRP9. Within the SRP complex, interacts (via N-terminus) with srpa-68 (via C-terminus).

Its subcellular location is the cytoplasm. The protein localises to the endoplasmic reticulum. In terms of biological role, component of the signal recognition particle (SRP) complex, a ribonucleoprotein complex that mediates the cotranslational targeting of secretory and membrane proteins to the endoplasmic reticulum (ER). The SRP complex interacts with the signal sequence in nascent secretory and membrane proteins and directs them to the membrane of the ER. The SRP complex targets the ribosome-nascent chain complex to the SRP receptor (SR), which is anchored in the ER, where SR compaction and GTPase rearrangement drive cotranslational protein translocation into the ER. Binds the signal recognition particle RNA (7SL RNA) in presence of srpa-68. Can bind 7SL RNA with low affinity. The SRP complex possibly participates in the elongation arrest function. In Caenorhabditis elegans, this protein is Signal recognition particle subunit SRP72.